The primary structure comprises 329 residues: MVKFFQPKISPLPDGIDLKGSTAVVTGASAGMGLELTRQLLQLNISTVILAVRNVAKGENVVKQLRGDPHIRTYNGNATLKVMELDMDKYDSVQRFAKHLRDEIPIVNFLILNAGIGLLKHDRSPSGHDRTLQVNYYSNALLIAELLPYLKASAERTTIPTRITWVGSRAFETTSLQKTPLQPNERVLEHMDKKEFFAPFQRYGDSKLLCLLFMCSLARQIDPKKVIINMLCPGMVNTNMSDVLPVYLRAVINVVKAIRARPVEVGVWIILNAALVAGPDSHGKFLIDKDIASESQYISSPAGQEVQKKIWEETIEELSRLTTLPPEVN.

Lys-57, Asp-86, Asn-113, Tyr-203, and Lys-207 together coordinate NADP(+). Tyr-203 serves as the catalytic Proton acceptor. Residue Lys-207 is the Lowers pKa of active site Tyr of the active site.

This sequence belongs to the short-chain dehydrogenases/reductases (SDR) family.

Its pathway is secondary metabolite biosynthesis. Its function is as follows. Short-chain dehydrogenase/reductase; part of the gene cluster that mediates the biosynthesis of the tropolone class of fungal maleic anhydrides. The pathway begins with the synthesis of 3-methylorcinaldehyde by the non-reducing polyketide synthase (PKS) tropA. 3-methylorcinaldehyde is the substrate for the FAD-dependent monooxygenase tropB to yield a dearomatized hydroxycyclohexadione. The 2-oxoglutarate-dependent dioxygenase tropC then performs the oxidative ring expansion to provide the first tropolone metabolite stipitaldehyde. Trop D converts stipitaldehyde into stipitacetal which is in turn converted to stipitalide by the short-chain dehydrogenase/reductase tropE. The next steps involve tropF, tropG, tropH, tropI and tropJ to form successive tropolone maleic anhydrides including stipitaldehydic, stipitatonic and stipitatic acids. The protein is Short-chain dehydrogenase/reductase tropG of Talaromyces stipitatus (strain ATCC 10500 / CBS 375.48 / QM 6759 / NRRL 1006) (Penicillium stipitatum).